We begin with the raw amino-acid sequence, 156 residues long: MPVFTHLDDDRARMVDVSAKGEVYRKAVATGTITLRPDTLSAIRDGTVVKGNVLATARVAATLAIKDTPRLIPMCHAIPVHGIDITFDYTKTGITATVTVISAGKTGVEMEALVGVSTALLTIWDMVKSAEKDEKGQYPVTGISDIRVLEKVKQDL.

Residues 74–76 (MCH) and 110–111 (ME) each bind substrate. Asp125 is an active-site residue.

Belongs to the MoaC family. As to quaternary structure, homohexamer; trimer of dimers.

It catalyses the reaction (8S)-3',8-cyclo-7,8-dihydroguanosine 5'-triphosphate = cyclic pyranopterin phosphate + diphosphate. It participates in cofactor biosynthesis; molybdopterin biosynthesis. Functionally, catalyzes the conversion of (8S)-3',8-cyclo-7,8-dihydroguanosine 5'-triphosphate to cyclic pyranopterin monophosphate (cPMP). The sequence is that of Probable cyclic pyranopterin monophosphate synthase from Methanospirillum hungatei JF-1 (strain ATCC 27890 / DSM 864 / NBRC 100397 / JF-1).